The sequence spans 413 residues: ATP phosphoribosyltransferase regulatory subunit (413 aa).

The segment at 1-21 (MRSRAARKFSTTPGTRDVLPP) is disordered.

The protein belongs to the class-II aminoacyl-tRNA synthetase family. HisZ subfamily. In terms of assembly, heteromultimer composed of HisG and HisZ subunits.

It localises to the cytoplasm. Its pathway is amino-acid biosynthesis; L-histidine biosynthesis; L-histidine from 5-phospho-alpha-D-ribose 1-diphosphate: step 1/9. In terms of biological role, required for the first step of histidine biosynthesis. May allow the feedback regulation of ATP phosphoribosyltransferase activity by histidine. In Rubrobacter xylanophilus (strain DSM 9941 / JCM 11954 / NBRC 16129 / PRD-1), this protein is ATP phosphoribosyltransferase regulatory subunit.